We begin with the raw amino-acid sequence, 624 residues long: Sulfite reductase [ferredoxin] (624 aa).

The 3'-(S-cysteinyl)-tyrosine (Tyr-Cys) cross-link spans 52–137; the sequence is YQQDNRDNRV…ENLGSTISAC (86 aa). 4 residues coordinate [4Fe-4S] cluster: C446, C452, C491, and C495. C495 is a binding site for siroheme.

It belongs to the nitrite and sulfite reductase 4Fe-4S domain family. Monomer. Requires siroheme as cofactor. [4Fe-4S] cluster serves as cofactor.

The catalysed reaction is hydrogen sulfide + 6 oxidized [2Fe-2S]-[ferredoxin] + 3 H2O = sulfite + 6 reduced [2Fe-2S]-[ferredoxin] + 7 H(+). Catalyzes the reduction of sulfite to sulfide, a step in the biosynthesis of sulfur-containing amino acids and cofactors. The protein is Sulfite reductase [ferredoxin] (sir) of Synechococcus elongatus (strain ATCC 33912 / PCC 7942 / FACHB-805) (Anacystis nidulans R2).